The primary structure comprises 275 residues: Ribosomal RNA small subunit methyltransferase A (275 aa).

Residues asparagine 19, leucine 21, glycine 46, glutamate 71, aspartate 94, and asparagine 117 each contribute to the S-adenosyl-L-methionine site.

It belongs to the class I-like SAM-binding methyltransferase superfamily. rRNA adenine N(6)-methyltransferase family. RsmA subfamily.

Its subcellular location is the cytoplasm. The catalysed reaction is adenosine(1518)/adenosine(1519) in 16S rRNA + 4 S-adenosyl-L-methionine = N(6)-dimethyladenosine(1518)/N(6)-dimethyladenosine(1519) in 16S rRNA + 4 S-adenosyl-L-homocysteine + 4 H(+). In terms of biological role, specifically dimethylates two adjacent adenosines (A1518 and A1519) in the loop of a conserved hairpin near the 3'-end of 16S rRNA in the 30S particle. May play a critical role in biogenesis of 30S subunits. The protein is Ribosomal RNA small subunit methyltransferase A of Burkholderia orbicola (strain MC0-3).